A 304-amino-acid chain; its full sequence is Probable 5-dehydro-4-deoxyglucarate dehydratase (304 aa).

This sequence belongs to the DapA family.

The catalysed reaction is 5-dehydro-4-deoxy-D-glucarate + H(+) = 2,5-dioxopentanoate + CO2 + H2O. It participates in carbohydrate acid metabolism; D-glucarate degradation; 2,5-dioxopentanoate from D-glucarate: step 2/2. In Rhodococcus opacus (strain B4), this protein is Probable 5-dehydro-4-deoxyglucarate dehydratase.